Consider the following 426-residue polypeptide: AP-1 complex subunit mu-1 (426 aa).

One can recognise an MHD domain in the interval 167-425 (KNEVFLDVIE…TQNGTEYSIR (259 aa)).

This sequence belongs to the adaptor complexes medium subunit family. In terms of assembly, adaptor protein complex 1 (AP-1) is a heterotetramer composed of two large adaptins (gamma-type subunit apl4 and beta-type subunit apl2), a medium adaptin (mu-type subunit apm1) and a small adaptin (sigma-type subunit aps1). AP-1 interacts with clathrin. Interacts with sad1.

It localises to the cytoplasmic vesicle. It is found in the clathrin-coated vesicle membrane. The protein localises to the membrane. The protein resides in the clathrin-coated pit. Functionally, component of the adaptor complexes which link clathrin to receptors in coated vesicles. Clathrin-associated protein complexes are believed to interact with the cytoplasmic tails of membrane proteins, leading to their selection and concentration. This Schizosaccharomyces pombe (strain 972 / ATCC 24843) (Fission yeast) protein is AP-1 complex subunit mu-1 (apm1).